Here is a 938-residue protein sequence, read N- to C-terminus: Isoleucine--tRNA ligase (938 aa).

A 'HIGH' region motif is present at residues 58 to 68 (PYANGSIHIGH). Residue Lys-183 is modified to N6-acetyllysine. Glu-561 lines the L-isoleucyl-5'-AMP pocket. The 'KMSKS' region signature appears at 602 to 606 (KMSKS). Lys-605 serves as a coordination point for ATP. Positions 901, 904, 921, and 924 each coordinate Zn(2+).

Belongs to the class-I aminoacyl-tRNA synthetase family. IleS type 1 subfamily. In terms of assembly, monomer. It depends on Zn(2+) as a cofactor.

The protein resides in the cytoplasm. The catalysed reaction is tRNA(Ile) + L-isoleucine + ATP = L-isoleucyl-tRNA(Ile) + AMP + diphosphate. Functionally, catalyzes the attachment of isoleucine to tRNA(Ile). As IleRS can inadvertently accommodate and process structurally similar amino acids such as valine, to avoid such errors it has two additional distinct tRNA(Ile)-dependent editing activities. One activity is designated as 'pretransfer' editing and involves the hydrolysis of activated Val-AMP. The other activity is designated 'posttransfer' editing and involves deacylation of mischarged Val-tRNA(Ile). The protein is Isoleucine--tRNA ligase of Shigella boydii serotype 4 (strain Sb227).